The chain runs to 198 residues: Cyclin-dependent kinase inhibitor 1B (198 aa).

Positions 1 to 11 (MSNVRVSNGSP) are enriched in polar residues. Residues 1 to 22 (MSNVRVSNGSPSLERMDARQAE) form a disordered region. Serine 10 bears the Phosphoserine; by UHMK1 mark. Residues 51–91 (DMEEASQRKWNFDFQNHKPLEGKYEWQEVEKGSLPEFYYRP) form an interaction with CDK2 region. Tyrosine 74 bears the Phosphotyrosine; by SRC mark. The interval 87–198 (FYYRPPRPPK…KKPGLRRRQT (112 aa)) is disordered. A Phosphotyrosine; by ABL, LYN and SRC modification is found at tyrosine 88. Tyrosine 89 carries the post-translational modification Phosphotyrosine. Over residues 104 to 113 (QESQDVSGNR) the composition is skewed to polar residues. Positions 126–137 (EDTHLVDQKTDT) are enriched in basic and acidic residues. A Nuclear localization signal motif is present at residues 153 to 169 (KRPATDDSSPQNKRANR). Threonine 157 carries the post-translational modification Phosphothreonine; by CaMK1, PKB/AKT1 and PIM1. Position 170 is a phosphothreonine (threonine 170). Residues 175-186 (SDGSPNAGSVEQ) show a composition bias toward polar residues. Position 187 is a phosphothreonine; by PKB/AKT1, CDK1 and CDK2 (threonine 187). A Phosphothreonine; by CaMK1, PKB/AKT1, RPS6KA1, RPS6KA3 and PIM1 modification is found at threonine 198.

This sequence belongs to the CDI family. In terms of assembly, forms a ternary complex composed of CCNE1, CDK2 and CDKN1B. Interacts directly with CCNE1; the interaction is inhibited by CDK2-dependent phosphorylation on Thr-187. Interacts with COPS5, subunit of the COP9 signalosome complex; the interaction leads to CDKN1B degradation. Interacts with NUP50; the interaction leads to nuclear import and degradation of phosphorylated CDKN1B. Interacts with CCND1 and SNX6. Interacts (Thr-198-phosphorylated form) with 14-3-3 proteins, binds strongly YWHAQ, weakly YWHAE and YWHAH, but not YWHAB nor YWHAZ; the interaction with YWHAQ results in translocation to the cytoplasm. Interacts with AKT1 and LYN; the interactions lead to cytoplasmic mislocation, phosphorylation of CDKN1B and inhibition of cell cycle arrest. Forms a ternary complex with CCNA2 and CDK2; CDKN1B inhibits the kinase activity of CDK2 through conformational rearrangements. Interacts (unphosphorylated form) with CDK2. Forms a complex with CDK2 and SPDYA, but does not directly interact with SPDYA. Forms a ternary complex composed of cyclin D, CDK4 and CDKN1B. Interacts (phosphorylated on Tyr-88 and Tyr-89) with CDK4; the interaction is required for cyclin D and CDK4 complex assembly, induces nuclear translocation and activates the CDK4 kinase activity. Interacts with GRB2. Interacts with PIM1. Identified in a complex with SKP1, SKP2 and CKS1B. Interacts with UHMK1; the interaction leads to cytoplasmic mislocation, phosphorylation of CDKN1B and inhibition of cell cycle arrest. Also interacts with CDK1. Dephosphorylated on Thr-187 by PPM1H, leading to CDKN1B stability. In terms of processing, phosphorylated; phosphorylation occurs on serine, threonine and tyrosine residues. Phosphorylation on Ser-10 is the major site of phosphorylation in resting cells, takes place at the G(0)-G(1) phase and leads to protein stability. Phosphorylation on other sites is greatly enhanced by mitogens, growth factors, cMYC and in certain cancer cell lines. The phosphorylated form found in the cytoplasm is inactivate. Phosphorylation on Thr-198 is required for interaction with 14-3-3 proteins. Phosphorylation on Thr-187, by CDK1 and CDK2 leads to protein ubiquitination and proteasomal degradation. Tyrosine phosphorylation promotes this process. Phosphorylation by PKB/AKT1 can be suppressed by LY294002, an inhibitor of the catalytic subunit of PI3K. Phosphorylation on Tyr-88 and Tyr-89 has no effect on binding CDK2, but is required for binding CDK4. Dephosphorylated on tyrosine residues by G-CSF. Dephosphorylated on Thr-187 by PPM1H, leading to CDKN1B stability. Post-translationally, ubiquitinated; in the cytoplasm by the KPC complex (composed of RNF123/KPC1 and UBAC1/KPC2) and, in the nucleus, by SCF(SKP2). The latter requires prior phosphorylation on Thr-187. Ubiquitinated; by a TRIM21-containing SCF(SKP2)-like complex; leads to its degradation. Subject to degradation in the lysosome. Interaction with SNX6 promotes lysosomal degradation.

Its subcellular location is the nucleus. The protein localises to the cytoplasm. It localises to the endosome. Important regulator of cell cycle progression. Inhibits the kinase activity of CDK2 bound to cyclin A, but has little inhibitory activity on CDK2 bound to SPDYA. Involved in G1 arrest. Potent inhibitor of cyclin E- and cyclin A-CDK2 complexes. Forms a complex with cyclin type D-CDK4 complexes and is involved in the assembly, stability, and modulation of CCND1-CDK4 complex activation. Acts either as an inhibitor or an activator of cyclin type D-CDK4 complexes depending on its phosphorylation state and/or stoichometry. This Felis catus (Cat) protein is Cyclin-dependent kinase inhibitor 1B (CDKN1B).